Here is a 42-residue protein sequence, read N- to C-terminus: Gastric inhibitory polypeptide (42 aa).

The protein belongs to the glucagon family.

It localises to the secreted. In terms of biological role, potent stimulator of insulin secretion and relatively poor inhibitor of gastric acid secretion. The chain is Gastric inhibitory polypeptide (GIP) from Bos taurus (Bovine).